We begin with the raw amino-acid sequence, 554 residues long: Heterochromatin protein 1-binding protein 3 (554 aa).

Residue Ala-2 is modified to N-acetylalanine. Ser-6 is modified (phosphoserine). 2 disordered regions span residues 30 to 136 (LGEK…KTIP) and 142 to 161 (SASQ…SPRP). Thr-51 is modified (phosphothreonine). Residues 60-71 (GEEEKPEPDGSS) are compositionally biased toward acidic residues. Residue Lys-64 forms a Glycyl lysine isopeptide (Lys-Gly) (interchain with G-Cter in SUMO2) linkage. Phosphothreonine occurs at positions 72 and 85. A compositionally biased stretch (polar residues) spans 72 to 93 (EESISTVEEQENETPPATSSEA). Basic and acidic residues predominate over residues 94-129 (EQPKGEPESGEKEENNNKSAEEPKKDEKDQSKEKEK). Residue Lys-97 forms a Glycyl lysine isopeptide (Lys-Gly) (interchain with G-Cter in SUMO2) linkage. Residues 142–156 (SASQLARAQRQTPMA) show a composition bias toward polar residues. Phosphoserine occurs at positions 144, 157, and 158. One can recognise an H15 1 domain in the interval 159–234 (PRPKMDAILT…GASGSFVVVQ (76 aa)). Lys-192 carries the N6-acetyllysine modification. The interval 229–254 (SFVVVQKSKPPQKSKNRKKGSALDPE) is disordered. Over residues 238-248 (PPQKSKNRKKG) the composition is skewed to basic residues. At Ser-249 the chain carries Phosphoserine. Residues 255-259 (PQVKL) carry the PxVxL motif motif. H15 domains are found at residues 255 to 330 (PQVK…QLKK) and 337 to 413 (LGGS…QLSF). A Glycyl lysine isopeptide (Lys-Gly) (interchain with G-Cter in SUMO2) cross-link involves residue Lys-258. Residues 420-554 (GVLFPKKESG…AMKKSFKTKK (135 aa)) are disordered. Positions 430 to 451 (GSDDEDEDDDDDESSEDSEDEE) are enriched in acidic residues. Phosphoserine is present on residues Ser-443, Ser-444, and Ser-447. The span at 464–475 (AKSQGKTASMKQ) shows a compositional bias: polar residues. Composition is skewed to basic residues over residues 490–511 (GKVR…RKAR) and 544–554 (SAMKKSFKTKK).

In terms of assembly, interacts (via PxVxL motif) with CBX5 (via Trp-174).

It is found in the nucleus. The protein localises to the chromosome. In terms of biological role, component of heterochromatin that maintains heterochromatin integrity during G1/S progression and regulates the duration of G1 phase to critically influence cell proliferative capacity. May play a role in hypoxia-induced oncogenesis. The polypeptide is Heterochromatin protein 1-binding protein 3 (Hp1bp3) (Mus musculus (Mouse)).